We begin with the raw amino-acid sequence, 1256 residues long: MSDDNNSNNMSNNNNNNNNNNNNNNNNNNNNNNNNNNNSNNNNSNNNNENNNNKSFQIQPILIQISEILQQSIELKLCSSVNTHNVFWDTLLYNLELNGDAISMIISLLLTKYILLLNNENNQYSLLQALFTKLTNASVEEFNDLLNGNNSNNNSNNNNNNNNNNNNNNNNNNNNNNNNNNNNNNNNNNNNNNNNNNNNNNNNSNGNNINTSNGNEDDVEQQTESTEQDFTSTSQNSTPSISRLASKLSQTDLDSFNLSISETNLTGVNYSSVSPQQSSPPLISTSSTGSLSNDYININNNNNSNSNININTSGTNDSDSTTTFSINGINMSSEEIKESETIRLSILSTIGYLSLFHKFNPQFPTLKVIIHKLGEIQLEKSRFEYSLHNEVLRILQTNNQDNNDFLFFLIDQCSDQNSSNLDNLKLNNNINKINSWYNPSIRKILREESVSKSKAVFEHLLLFLKHPLLSEKRVLFLLQMLKHYLLVIPVLSSLTIQSALSIVKTYYLWPKPYGCFAKEILEILSLELKSPGSYFRNILAREFPSIMSSPNSIGSASLTNTLFTNKNRPTIHFLVDKYNSEALLIQELFEANYNTYTPSITQLQSNNIENIYKRILGIDNSQLGIEFLEPIDVSTIHFKILDVMNKTMYLEENESKSIRIKELISIRDEIIKFCNLSTNSNSNLNSTTTTATTTNILKHVPKNIELPNLNYQFISMLTLSVRHKRPDQFGTPFYIPINRKSTTSLIDLLSNYQDQDFHNQVKFAIIGNDTSVQHILASYLFLKYQQPELFHSLDIMFYIIPTGTSNCKIAELISSFDPWYTNQVRQCLVSLYSIIPSFPPISKLSKIERQSFIESISQIKDLRNSIALKENELEQQQQQQPQQPQQQNSDVASIILNEQQQQQQQQQSNLNNSNNEIKNDINSSTTAATTTTTTTTTTTTTTIHKDNPVETPSHTIQTEIEYLFREASFSLEIPVLKCEGWGIDDNNYFTIPFLMKAEMNTSTFLAGFSDLISSDPTQINKLMGKYSPMNVNIKILQCNQMGVPLQWINIDNKTFYDIEINNIMPKSISHPTIQSTSSPSTSSSNNNNSTTTATNNNGNNGNNNNGNGNNNNNNNNNNNNNNNNNNNNNNGPATISSSLKKSIIQSKPKMQLVLIEAEQKKKKVKSSEDTFKFTINAIEMESIDKKKSFDILLDGQLHGPFNKIKISFCSSNISNIINNAAKNSSSSNSSNYSIGFNDLQDNDFITFPIMSFLPLV.

Disordered regions lie at residues 1–53 (MSDD…NNNN), 145–243 (LLNG…SISR), 898–951 (EQQQ…PVET), and 1069–1136 (SHPT…ATIS). Over residues 147–214 (NGNNSNNNSN…NGNNINTSNG (68 aa)) the composition is skewed to low complexity. A compositionally biased stretch (polar residues) spans 222–243 (QTESTEQDFTSTSQNSTPSISR). Composition is skewed to low complexity over residues 898–916 (EQQQ…SNNE) and 925–942 (TTAA…TTTT). Residues 1069 to 1079 (SHPTIQSTSSP) are compositionally biased toward polar residues. Residues 1080–1136 (STSSSNNNNSTTTATNNNGNNGNNNNGNGNNNNNNNNNNNNNNNNNNNNNNGPATIS) are compositionally biased toward low complexity.

This Dictyostelium discoideum (Social amoeba) protein is Putative protein DDB_G0292252.